A 696-amino-acid polypeptide reads, in one-letter code: Catalase (696 aa).

Residues His64 and Asn137 contribute to the active site. A disordered region spans residues 187 to 211 (SLAQGSQISSERGSPKAYSNTEPNK). Residues 189–208 (AQGSQISSERGSPKAYSNTE) are compositionally biased toward polar residues. Tyr353 contributes to the heme binding site.

Belongs to the catalase family. Requires heme as cofactor.

It catalyses the reaction 2 H2O2 = O2 + 2 H2O. In terms of biological role, occurs in almost all aerobically respiring organisms and serves to protect cells from the toxic effects of hydrogen peroxide. The sequence is that of Catalase from Penicillium janthinellum (Penicillium vitale).